The following is a 126-amino-acid chain: Thioredoxin-like 3-3 (126 aa).

The tract at residues 1 to 24 is disordered; sequence MRKQESEGANLEFESKSNDNGNVK. The region spanning 5 to 126 is the Thioredoxin domain; sequence ESEGANLEFE…RLHDRLWLHS (122 aa). Catalysis depends on nucleophile residues Cys-55 and Cys-58. A disulfide bond links Cys-55 and Cys-58.

Belongs to the thioredoxin family.

In terms of biological role, probable thiol-disulfide oxidoreductase that may participate in various redox reactions. The protein is Thioredoxin-like 3-3 of Arabidopsis thaliana (Mouse-ear cress).